A 549-amino-acid polypeptide reads, in one-letter code: Chaperonin GroEL (549 aa).

Residues 30-33 (TLGP), Lys-51, 87-91 (DGTTT), Gly-415, 479-481 (NAA), and Asp-495 each bind ATP.

This sequence belongs to the chaperonin (HSP60) family. In terms of assembly, forms a cylinder of 14 subunits composed of two heptameric rings stacked back-to-back. Interacts with the co-chaperonin GroES.

It localises to the cytoplasm. It catalyses the reaction ATP + H2O + a folded polypeptide = ADP + phosphate + an unfolded polypeptide.. Its function is as follows. Together with its co-chaperonin GroES, plays an essential role in assisting protein folding. The GroEL-GroES system forms a nano-cage that allows encapsulation of the non-native substrate proteins and provides a physical environment optimized to promote and accelerate protein folding. The protein is Chaperonin GroEL of Stenotrophomonas maltophilia (strain R551-3).